We begin with the raw amino-acid sequence, 197 residues long: MLESVKANFTESIQTMIASLEELPEPIALATQMMVNALINGNKILSCGNGGSAAHAQSFASQMLNRYERERPSLPAIALSTDTSTMTSIANDYSYDEVFSKQVRALGQTGDILLAISPNGASRSVISAMEAALSRDMTIVALTGLDGGEMAGLLGPNDVEIRVPSSRAVRIHEVHLLVIHNLCEGVDDCLFPETSQE.

In terms of domain architecture, SIS spans 34–192 (MVNALINGNK…CEGVDDCLFP (159 aa)). Substrate is bound by residues 49-51 (NGG), glutamine 62, 91-92 (ND), serine 122, and histidine 172. Zn(2+) is bound at residue glutamine 62. Positions 172 and 180 each coordinate Zn(2+).

Belongs to the SIS family. GmhA subfamily. In terms of assembly, homotetramer. Zn(2+) is required as a cofactor.

The protein resides in the cytoplasm. It catalyses the reaction 2 D-sedoheptulose 7-phosphate = D-glycero-alpha-D-manno-heptose 7-phosphate + D-glycero-beta-D-manno-heptose 7-phosphate. It functions in the pathway carbohydrate biosynthesis; D-glycero-D-manno-heptose 7-phosphate biosynthesis; D-glycero-alpha-D-manno-heptose 7-phosphate and D-glycero-beta-D-manno-heptose 7-phosphate from sedoheptulose 7-phosphate: step 1/1. Functionally, catalyzes the isomerization of sedoheptulose 7-phosphate in D-glycero-D-manno-heptose 7-phosphate. The chain is Phosphoheptose isomerase from Pseudoalteromonas atlantica (strain T6c / ATCC BAA-1087).